The chain runs to 217 residues: 3,4-dihydroxy-2-butanone 4-phosphate synthase (217 aa).

Residues 37–38 (RE), Asp42, 150–154 (RRGHT), and Glu174 each bind D-ribulose 5-phosphate. Glu38 contributes to the Mg(2+) binding site. A Mg(2+)-binding site is contributed by His153.

The protein belongs to the DHBP synthase family. Homodimer. The cofactor is Mg(2+). Mn(2+) serves as cofactor.

It catalyses the reaction D-ribulose 5-phosphate = (2S)-2-hydroxy-3-oxobutyl phosphate + formate + H(+). It participates in cofactor biosynthesis; riboflavin biosynthesis; 2-hydroxy-3-oxobutyl phosphate from D-ribulose 5-phosphate: step 1/1. Catalyzes the conversion of D-ribulose 5-phosphate to formate and 3,4-dihydroxy-2-butanone 4-phosphate. This is 3,4-dihydroxy-2-butanone 4-phosphate synthase from Serratia proteamaculans (strain 568).